The sequence spans 197 residues: MDMTSRMTSHFRDAMALCEQSMQALSEPLAGAVELLFAALANNGRILACGNGGSAADAQHFVAELVGRFERDRLPLAGIALNTDTSILTAVGNDYGFDEIYERQVNALGQPGDVLVAISTSGNSPNVVRAMEAARDREMHVIALTGKGGGVMGELITPHDVHLCVPHDRTMRIQEIHILLLHALCDGIDALLLGDTE.

The SIS domain maps to 36 to 197 (LFAALANNGR…IDALLLGDTE (162 aa)). A substrate-binding site is contributed by 51 to 53 (NGG). Positions 60 and 64 each coordinate Zn(2+). Residues Glu-64, 93–94 (ND), 119–121 (STS), Ser-124, and Gln-174 each bind substrate. Zn(2+) contacts are provided by Gln-174 and His-182.

The protein belongs to the SIS family. GmhA subfamily. As to quaternary structure, homotetramer. It depends on Zn(2+) as a cofactor.

The protein resides in the cytoplasm. It carries out the reaction 2 D-sedoheptulose 7-phosphate = D-glycero-alpha-D-manno-heptose 7-phosphate + D-glycero-beta-D-manno-heptose 7-phosphate. The protein operates within carbohydrate biosynthesis; D-glycero-D-manno-heptose 7-phosphate biosynthesis; D-glycero-alpha-D-manno-heptose 7-phosphate and D-glycero-beta-D-manno-heptose 7-phosphate from sedoheptulose 7-phosphate: step 1/1. Its function is as follows. Catalyzes the isomerization of sedoheptulose 7-phosphate in D-glycero-D-manno-heptose 7-phosphate. In Bordetella avium (strain 197N), this protein is Phosphoheptose isomerase.